The chain runs to 84 residues: Putative membrane protein insertion efficiency factor (84 aa).

The interval 63-84 (WGGSGYDPVPGADPEHDRRPRG) is disordered. Over residues 75–84 (DPEHDRRPRG) the composition is skewed to basic and acidic residues.

The protein belongs to the UPF0161 family.

It is found in the cell inner membrane. Its function is as follows. Could be involved in insertion of integral membrane proteins into the membrane. This is Putative membrane protein insertion efficiency factor from Cereibacter sphaeroides (strain ATCC 17025 / ATH 2.4.3) (Rhodobacter sphaeroides).